Here is a 590-residue protein sequence, read N- to C-terminus: Protein O-linked-mannose beta-1,4-N-acetylglucosaminyltransferase 2 (590 aa).

Topologically, residues Met-1 to Gly-4 are cytoplasmic. A helical; Signal-anchor for type II membrane protein transmembrane segment spans residues Thr-5–Leu-25. Over Ser-26–Thr-590 the chain is Lumenal. N-linked (GlcNAc...) asparagine glycans are attached at residues Asn-98, Asn-275, and Asn-553. Positions Arg-494 to Thr-590 constitute a Fibronectin type-III domain.

Belongs to the glycosyltransferase 61 family.

It localises to the endoplasmic reticulum membrane. The catalysed reaction is 3-O-(alpha-D-mannosyl)-L-threonyl-[protein] + UDP-N-acetyl-alpha-D-glucosamine = 3-O-(N-acetyl-beta-D-glucosaminyl-(1-&gt;4)-alpha-D-mannosyl)-L-threonyl-[protein] + UDP + H(+). Its pathway is protein modification; protein glycosylation. In terms of biological role, O-linked mannose beta-1,4-N-acetylglucosaminyltransferase that transfers UDP-N-acetyl-D-glucosamine to the 4-position of the mannose to generate N-acetyl-D-glucosamine-beta-1,4-O-D-mannosylprotein. Involved in the biosynthesis of the phosphorylated O-mannosyl trisaccharide (N-acetylgalactosamine-beta-3-N-acetylglucosamine-beta-4-(phosphate-6-)mannose), a carbohydrate structure present in alpha-dystroglycan (DAG1), which is required for binding laminin G-like domain-containing extracellular proteins with high affinity. This Takifugu rubripes (Japanese pufferfish) protein is Protein O-linked-mannose beta-1,4-N-acetylglucosaminyltransferase 2 (pomgnt2).